The following is a 158-amino-acid chain: NAD(P)H-quinone oxidoreductase subunit N (158 aa).

The protein belongs to the complex I NdhN subunit family. As to quaternary structure, NDH-1 can be composed of about 15 different subunits; different subcomplexes with different compositions have been identified which probably have different functions.

It localises to the cellular thylakoid membrane. The enzyme catalyses a plastoquinone + NADH + (n+1) H(+)(in) = a plastoquinol + NAD(+) + n H(+)(out). The catalysed reaction is a plastoquinone + NADPH + (n+1) H(+)(in) = a plastoquinol + NADP(+) + n H(+)(out). NDH-1 shuttles electrons from an unknown electron donor, via FMN and iron-sulfur (Fe-S) centers, to quinones in the respiratory and/or the photosynthetic chain. The immediate electron acceptor for the enzyme in this species is believed to be plastoquinone. Couples the redox reaction to proton translocation, and thus conserves the redox energy in a proton gradient. Cyanobacterial NDH-1 also plays a role in inorganic carbon-concentration. In Synechococcus elongatus (strain ATCC 33912 / PCC 7942 / FACHB-805) (Anacystis nidulans R2), this protein is NAD(P)H-quinone oxidoreductase subunit N.